A 402-amino-acid polypeptide reads, in one-letter code: Selenoprotein P (402 aa).

The N-terminal stretch at 1–19 (MWRGLGLALALCLLLTGGT) is a signal peptide. Residue selenocysteine 59 is a non-standard amino acid, selenocysteine. Residues asparagine 83 and asparagine 174 are each glycosylated (N-linked (GlcNAc...) asparagine). The tract at residues 196–291 (KTAEASQRHH…VGSESLQPSL (96 aa)) is disordered. The span at 203-231 (RHHHPHPHSHPHPHPHPHPHPHPHPHHGH) shows a compositional bias: basic residues. Repeat copies occupy residues 204-205 (HH), 206-207 (HP), 208-209 (HP), 210-211 (HS), 212-213 (HP), 214-215 (HP), 216-217 (HP), 218-219 (HP), 220-221 (HP), 222-223 (HP), 224-225 (HP), 226-227 (HP), and 228-229 (HH). The tract at residues 204-229 (HHHPHPHSHPHPHPHPHPHPHPHPHH) is 13 X 2 AA tandem repeats of H-[PHS]. Positions 232–247 (QLHENAHLSESPKPDT) are enriched in basic and acidic residues. Basic residues predominate over residues 259-269 (LHHHHHRHKGP). Position 284 is a phosphoserine (serine 284). 11 non-standard amino acids (selenocysteine) are found at residues selenocysteine 297, selenocysteine 307, selenocysteine 338, selenocysteine 350, selenocysteine 363, selenocysteine 365, selenocysteine 372, selenocysteine 388, selenocysteine 390, selenocysteine 397, and selenocysteine 399. Residues 367–402 (LPPAAUQAAGQQLNPTEASTKUSUKNKAKMUKUPSN) are disordered.

The protein belongs to the selenoprotein P family. In terms of processing, phosphorylation sites are present in the extracellular medium. As to expression, brain and kidney. Most prominently expressed in the cerebellar cortex, hippocampus and olfactory bulb.

It is found in the secreted. Functionally, constitutes a major selenium pool in the brain and may play an important role in developing and/or modulating the morphology of neurons and/or glial cells. The protein is Selenoprotein P of Bos taurus (Bovine).